Reading from the N-terminus, the 412-residue chain is UPF0761 membrane protein lpg0643 (412 aa).

The next 6 helical transmembrane spans lie at 36 to 56, 99 to 119, 137 to 157, 177 to 197, 210 to 230, and 241 to 261; these read ALAFTSLLAVVPLMSVGLAIF, LSIWGIVFLIFTALLVMFTIE, AFLLYWAIISLAPVLLGLSLA, ILHYSPFFLSLIGFTFLYVVV, GGLVAAILFESAKHAFAYYLI, and AFATVPIFFIWVYWVWIITLL.

This sequence belongs to the UPF0761 family.

The protein localises to the cell inner membrane. This is UPF0761 membrane protein lpg0643 from Legionella pneumophila subsp. pneumophila (strain Philadelphia 1 / ATCC 33152 / DSM 7513).